Here is a 359-residue protein sequence, read N- to C-terminus: Peptide chain release factor 1 (359 aa).

Gln-236 is subject to N5-methylglutamine.

This sequence belongs to the prokaryotic/mitochondrial release factor family. Post-translationally, methylated by PrmC. Methylation increases the termination efficiency of RF1.

The protein resides in the cytoplasm. Functionally, peptide chain release factor 1 directs the termination of translation in response to the peptide chain termination codons UAG and UAA. This Streptococcus thermophilus (strain ATCC BAA-250 / LMG 18311) protein is Peptide chain release factor 1.